The sequence spans 277 residues: MVVAVGLYTDIGKKTRDLLYKDYNTHQKFCLTTSSPNGVAITAAGTRKNESIFGELHTQIKNKKLTVDVKANSESDLLTTITVDEFGTPGLKSIINLVVPDQRSGKLEFQYLHEYAGVNASVGLNSNPMVNLSGAFGSKALSVGVDVSFDTATSDFTKYNAALSLTSPDLIASLHLNNHGDTLVASYYHLVKNHSGTAVGAELSHSMSRNESTLIFGSQHSLDPHTTIKTRFNNYGMASALVQHEWRPKSFVTISGDVDTKAIEKSTKVGLSLVLKH.

The protein belongs to the eukaryotic mitochondrial porin (TC 1.B.8.1) family.

It localises to the plastid outer membrane. In terms of biological role, forms a channel through the cell membrane that allows diffusion of small hydrophilic molecules. The channel adopts an open conformation at low or zero membrane potential and a closed conformation at potentials above 30-40 mV. The open state has a weak anion selectivity whereas the closed state is cation-selective. In Zea mays (Maize), this protein is Outer plastidial membrane protein porin (POR1).